Reading from the N-terminus, the 1138-residue chain is Solute carrier family 12 member 5 (1138 aa).

2 disordered regions span residues 1-62 (MSRR…KGRE) and 96-116 (QGSR…KPVQ). Over 1 to 98 (MSRRFTVTSL…ANYTNLPQGS (98 aa)) the chain is Cytoplasmic. A compositionally biased stretch (basic and acidic residues) spans 21–45 (PESRRHSVADPRRLPREDVKGDGNP). Residues 46-55 (KESSPFINST) are compositionally biased toward polar residues. Position 57 is a phosphothreonine (T57). The span at 98 to 111 (SREHEEAENNEGGK) shows a compositional bias: basic and acidic residues. A discontinuously helical transmembrane segment spans residues 99 to 120 (REHEEAENNEGGKKKPVQAPRM). K113 is a K(+) binding site. Over 121–129 (GTFMGVYLP) the chain is Extracellular. The helical transmembrane segment at 130-151 (CLQNIFGVILFLRLTWVVGIAG) threads the bilayer. Over 152-174 (IMESFCMVFICCSCTMLTAISMS) the chain is Cytoplasmic. Residues 175-203 (AIATNGVVPAGGSYYMISRSLGPEFGGAV) form a helical membrane-spanning segment. A184 contacts chloride. Residues 204 to 229 (GLCFYLGTTFAGAMYILGTIEILLAY) lie on the Extracellular side of the membrane. Transmembrane regions (helical) follow at residues 230–250 (LFPA…AAML) and 251–276 (NNMR…KYVN). Residues 277–402 (KFALVFLGCV…ERRGMPSVGL (126 aa)) lie on the Extracellular side of the membrane. A disulfide bridge connects residues C310 and C325. N314, N333, N351, and N362 each carry an N-linked (GlcNAc...) asparagine glycan. Cysteines 345 and 354 form a disulfide. The chain crosses the membrane as a helical span at residues 403–420 (ADGTPVDMDHPYVFSDMT). M410 contacts K(+). 2 residues coordinate chloride: Y414 and V415. Over 421 to 429 (SYFTLLVGI) the chain is Cytoplasmic. Residues 430-453 (YFPSVTGIMAGSNRSGDLRDAQKS) form a helical membrane-spanning segment. D446 lines the K(+) pocket. Over 454–485 (IPTGTILAIATTSAVYISSVVLFGACIEGVVL) the chain is Extracellular. A helical membrane pass occupies residues 486–513 (RDKFGEAVNGNLVVGTLAWPSPWVIVIG). The Cytoplasmic portion of the chain corresponds to 514–534 (SFFSTCGAGLQSLTGAPRLLQ). 2 helical membrane passes run 535–555 (AISR…KANG) and 556–578 (EPTW…ASLD). Residue E569 participates in chloride binding. At 579–592 (EVAPILSMFFLMCY) the chain is on the cytoplasmic side. A run of 2 helical transmembrane segments spans residues 593–615 (MFVN…PRFR) and 616–632 (YYHW…CLAL). Residues 633-1138 (MFICSWYYAL…GGREVITIYS (506 aa)) are Cytoplasmic-facing. Residues 667 to 681 (GIRGLSLSAARYALL) are scissor helix. Phosphothreonine; by OXSR1 and STK39 is present on T929. Residues 943–1051 (HLTKNERERE…GPSPVSSEGI (109 aa)) are disordered. Basic and acidic residues predominate over residues 945 to 962 (TKNEREREIQSITDESRG). Residues 982-994 (TACDNEEKPEEEV) show a composition bias toward acidic residues. Low complexity predominate over residues 1001–1012 (SAPSCPSSSPSP). The segment covering 1019–1041 (ERETDPEVHLTWTKDKSVAEKNK) has biased composition (basic and acidic residues). Position 1029 is a phosphothreonine; by OXSR1 and STK39 (T1029). 3 positions are modified to phosphoserine: S1044, S1047, and S1048.

This sequence belongs to the SLC12A transporter family. K/Cl co-transporter subfamily. Homodimer; adopts a domain-swap conformation at the scissor helices connecting the transmembrane domain and C-terminal domain. Heterodimer with K-Cl cotransporters SLC12A6 and SLC12A7. Interacts with AP2A1. In terms of processing, phosphorylated at Thr-929 and Thr-1029 by OXSR1/OSR1 and STK39/SPAK downstream of WNK kinases (WNK1, WNK2, WNK3 or WNK4), inhibiting the potassium-chloride cotransport activity. Expressed in brainstem, spinal cord and olfactory bulb of 17 dpc embryos. Expressed in all parts of the brain and spinal cord in postnatal day 14 mice. In terms of tissue distribution, expressed in brainstem and spinal cord of 17 dpc embryos. Expressed in all parts of the brain and spinal cord in postnatal day 14 mice.

Its subcellular location is the cell membrane. It localises to the cell projection. The protein resides in the dendrite. It carries out the reaction K(+)(in) + chloride(in) = K(+)(out) + chloride(out). Its activity is regulated as follows. Inhibited following phosphorylation by OXSR1/OSR1 and STK39/SPAK: phosphorylation takes place downstream of WNK kinases (WNK1, WNK2, WNK3 or WNK4) in response to hyperosmotic stress and subsequent cell shrinkage. Its function is as follows. Mediates electroneutral potassium-chloride cotransport in mature neurons and is required for neuronal Cl(-) homeostasis. As major extruder of intracellular chloride, it establishes the low neuronal Cl(-) levels required for chloride influx after binding of GABA-A and glycine to their receptors, with subsequent hyperpolarization and neuronal inhibition. Involved in the regulation of dendritic spine formation and maturation. This is Solute carrier family 12 member 5 (Slc12a5) from Mus musculus (Mouse).